We begin with the raw amino-acid sequence, 556 residues long: RING finger protein 207 (556 aa).

The RING-type zinc-finger motif lies at 25–64; it reads CPLCHAQYERPCLLDCFHEFCAGCLRGRAADGRLACPLCQ. The B box-type; atypical zinc finger occupies 93-145; that stretch reads TEVVRCANCDLECGKQDAETTYFCNTCGQPLCARCRDETHRARMFARHDIVAL. The Zn(2+) site is built by C98, C101, C127, and H132. Coiled-coil stretches lie at residues 218 to 273 and 385 to 425; these read TREA…NKAE and FTEH…SLIK. Residues 517–556 form a disordered region; the sequence is FQVPVDEPSDHPQNTHDDGVNAEAPARVSTLKPAMEKEVS. The segment covering 524-535 has biased composition (basic and acidic residues); it reads PSDHPQNTHDDG.

As to quaternary structure, interacts with the core-glycosylated, but not the fully glycosylated form of KCNH2/HERG. Interacts with DNAJA1 and HSPA8. Interacts (via the C-terminus) with HSPA1A; this interaction additively increases KCNH2 expression.

It localises to the cytoplasm. Its function is as follows. Plays a role in cardiac repolarization possibly by stabilizing membrane expression of the potassium channel KCNH2/HERG, or by assisting its synthesis, folding or export from the endoplasmic reticulum, in a heat shock protein-dependent manner. The protein is RING finger protein 207 (RNF207) of Bos taurus (Bovine).